A 538-amino-acid chain; its full sequence is Mitochondrial distribution and morphology protein 34 (538 aa).

Residues 1 to 224 (MSFRFDRSVF…LPTALFNMSQ (224 aa)) enclose the SMP-LTD domain. 2 disordered regions span residues 26 to 55 (ALNP…RKSG) and 231 to 251 (DGSR…NQPS).

It belongs to the MDM34 family. As to quaternary structure, component of the ER-mitochondria encounter structure (ERMES) or MDM complex, composed of MMM1, MDM10, MDM12 and MDM34.

Its subcellular location is the mitochondrion outer membrane. Component of the ERMES/MDM complex, which serves as a molecular tether to connect the endoplasmic reticulum (ER) and mitochondria. Components of this complex are involved in the control of mitochondrial shape and protein biogenesis, and function in nonvesicular lipid trafficking between the ER and mitochondria. MDM34 is required for the interaction of the ER-resident membrane protein MMM1 and the outer mitochondrial membrane-resident beta-barrel protein MDM10. This chain is Mitochondrial distribution and morphology protein 34, found in Candida glabrata (strain ATCC 2001 / BCRC 20586 / JCM 3761 / NBRC 0622 / NRRL Y-65 / CBS 138) (Yeast).